The chain runs to 205 residues: Holliday junction branch migration complex subunit RuvA (205 aa).

The interval 1–64 (MIGRLRGIVL…EDAQLLYGFN (64 aa)) is domain I. The segment at 65-143 (DKQERALFRE…GLNGDLFNQS (79 aa)) is domain II. The interval 144-156 (SDINLPATAKQTT) is flexible linker. Residues 157 to 205 (SDADSEAEAAAALVSLGYKPQEASRMVSKIAKPGADCETLIREALRAVL) are domain III.

This sequence belongs to the RuvA family. In terms of assembly, homotetramer. Forms an RuvA(8)-RuvB(12)-Holliday junction (HJ) complex. HJ DNA is sandwiched between 2 RuvA tetramers; dsDNA enters through RuvA and exits via RuvB. An RuvB hexamer assembles on each DNA strand where it exits the tetramer. Each RuvB hexamer is contacted by two RuvA subunits (via domain III) on 2 adjacent RuvB subunits; this complex drives branch migration. In the full resolvosome a probable DNA-RuvA(4)-RuvB(12)-RuvC(2) complex forms which resolves the HJ.

It localises to the cytoplasm. In terms of biological role, the RuvA-RuvB-RuvC complex processes Holliday junction (HJ) DNA during genetic recombination and DNA repair, while the RuvA-RuvB complex plays an important role in the rescue of blocked DNA replication forks via replication fork reversal (RFR). RuvA specifically binds to HJ cruciform DNA, conferring on it an open structure. The RuvB hexamer acts as an ATP-dependent pump, pulling dsDNA into and through the RuvAB complex. HJ branch migration allows RuvC to scan DNA until it finds its consensus sequence, where it cleaves and resolves the cruciform DNA. This chain is Holliday junction branch migration complex subunit RuvA, found in Photorhabdus laumondii subsp. laumondii (strain DSM 15139 / CIP 105565 / TT01) (Photorhabdus luminescens subsp. laumondii).